The primary structure comprises 581 residues: Multicopper oxidase LPR1 (581 aa).

The N-terminal stretch at 1–28 (MESLLCRRRIKRVMVLIIALTWLRSTCG) is a signal peptide. Cu cation contacts are provided by histidine 148, histidine 150, histidine 196, and histidine 198. 4 N-linked (GlcNAc...) asparagine glycosylation sites follow: asparagine 254, asparagine 298, asparagine 386, and asparagine 458. Residues 283 to 352 (PRLNVRRRKY…DVVVDFYKSP (70 aa)) form the Plastocyanin-like domain. Positions 464, 467, and 469 each coordinate Cu cation. N-linked (GlcNAc...) asparagine glycosylation is present at asparagine 546. Cu cation-binding residues include histidine 562, cysteine 563, histidine 564, histidine 568, and methionine 573.

It belongs to the multicopper oxidase family. The cofactor is Cu cation.

It localises to the endoplasmic reticulum membrane. Multicopper oxidase that may be involved in copper homeostasis and oxidative stress response, and that is necessary for root growth inhibition by low phosphate conditions. Functions together with LPR2 and PDR2 in a common pathway that adjusts root meristem activity to phosphate availability. Oxidizes the substrate 2,2'-azinobis-(3-ethylbenzthiazoline-6-sulphonate) in vitro. The protein is Multicopper oxidase LPR1 (LPR1) of Arabidopsis thaliana (Mouse-ear cress).